Here is a 56-residue protein sequence, read N- to C-terminus: UPF0434 protein Sden_2197 (56 aa).

This sequence belongs to the UPF0434 family.

The protein is UPF0434 protein Sden_2197 of Shewanella denitrificans (strain OS217 / ATCC BAA-1090 / DSM 15013).